The following is a 1989-amino-acid chain: Exophilin-5 (1989 aa).

Residues 7-63 (AFDFSFLNDEEARKILQVLERNEELQRAEKDRISKLQKTKRDIRWLQGVTGEWFEEI) form the RabBD domain. Disordered regions lie at residues 93–117 (NDPIELPTSRSKNVTNQKKPTPFSS) and 348–391 (TQSK…FLRA). 2 stretches are compositionally biased toward polar residues: residues 100-111 (TSRSKNVTNQKK) and 359-376 (HQQSPKRTPLSSIIWNRS). The segment covering 377–389 (DSSRDRENQEEFL) has biased composition (basic and acidic residues). Residue serine 603 is modified to Phosphoserine. 3 disordered regions span residues 631 to 651 (FSQISDDRRNPQSPNLQNPTV), 806 to 827 (STASLPFIQEHRTPPSFPRTDQ), and 882 to 933 (AALP…NQKN). The span at 641–651 (PQSPNLQNPTV) shows a compositional bias: polar residues. Phosphoserine occurs at positions 806 and 809. Polar residues predominate over residues 891 to 909 (KNSSLDAPVVPSTTVFSRR). Basic and acidic residues predominate over residues 910-927 (SPSDKDPSLGEREEKDNA). Phosphoserine occurs at positions 1028 and 1086. 3 disordered regions span residues 1094 to 1113 (EATERMTNVKSSGSTSVRKG), 1124 to 1152 (SCPSGEPHASTGREGRKKPLTSGMDASEL), and 1365 to 1493 (EIFS…TNCQ). A compositionally biased stretch (polar residues) spans 1098–1110 (RMTNVKSSGSTSV). Position 1124 is a phosphoserine (serine 1124). The segment covering 1379–1390 (SENKKERGKKLQ) has biased composition (basic and acidic residues). The segment covering 1416-1431 (SINSSNSGPSSLPALS) has biased composition (low complexity). Over residues 1434–1447 (NIGNSQTRRSSWEC) the composition is skewed to polar residues. Serine 1505 is modified (phosphoserine). Disordered stretches follow at residues 1521-1590 (EETQ…NRSS) and 1644-1737 (PEPT…PITF). Basic and acidic residues-rich tracts occupy residues 1551–1560 (ESRKAEDEMQ), 1573–1589 (NKNKTNLDDLVKGENRS), and 1658–1670 (RLSENGKHVKKSE). Over residues 1685-1709 (THVSNQKSNSISQRHQNEFKNVSES) the composition is skewed to polar residues. 4 positions are modified to phosphoserine: serine 1753, serine 1768, serine 1821, and serine 1851. Residues 1921–1989 (FLKDDLRNPP…LDENDKESEL (69 aa)) are disordered. Low complexity predominate over residues 1933–1943 (SESLSSNSPSS). Residues 1959 to 1989 (YEDDPVDSDCDTDTTTDDEYYLDENDKESEL) show a composition bias toward acidic residues.

As to quaternary structure, interacts with RAB27A. As to expression, expressed in keratinocytes.

Its function is as follows. May act as Rab effector protein and play a role in vesicle trafficking. This chain is Exophilin-5, found in Homo sapiens (Human).